We begin with the raw amino-acid sequence, 426 residues long: Glutamate-1-semialdehyde 2,1-aminomutase (426 aa).

The residue at position 265 (Lys265) is an N6-(pyridoxal phosphate)lysine.

It belongs to the class-III pyridoxal-phosphate-dependent aminotransferase family. HemL subfamily. As to quaternary structure, homodimer. It depends on pyridoxal 5'-phosphate as a cofactor.

It localises to the cytoplasm. It catalyses the reaction (S)-4-amino-5-oxopentanoate = 5-aminolevulinate. Its pathway is porphyrin-containing compound metabolism; protoporphyrin-IX biosynthesis; 5-aminolevulinate from L-glutamyl-tRNA(Glu): step 2/2. This is Glutamate-1-semialdehyde 2,1-aminomutase from Pseudoalteromonas translucida (strain TAC 125).